Reading from the N-terminus, the 172-residue chain is MVNLILVGPMGAGKSTIGRLLAKELHLAFKDSDKEIEQRCGANIPWIFDVEGEAGFREREQAMLSELCATDGMVIATGGGAVMRDGNRQILRAGGRVVYLHASVEHQIARTARDRNRPLLQKPNPGQILRDLMDLRDPLYREIADVVVETDERPPRLVVQEILERLRKLPPR.

11–16 (GAGKST) is an ATP binding site. Ser-15 provides a ligand contact to Mg(2+). Substrate is bound by residues Asp-33, Arg-57, and Gly-79. Arg-117 provides a ligand contact to ATP. Residue Arg-136 participates in substrate binding. An ATP-binding site is contributed by Arg-153.

Belongs to the shikimate kinase family. In terms of assembly, monomer. It depends on Mg(2+) as a cofactor.

The protein localises to the cytoplasm. It carries out the reaction shikimate + ATP = 3-phosphoshikimate + ADP + H(+). Its pathway is metabolic intermediate biosynthesis; chorismate biosynthesis; chorismate from D-erythrose 4-phosphate and phosphoenolpyruvate: step 5/7. In terms of biological role, catalyzes the specific phosphorylation of the 3-hydroxyl group of shikimic acid using ATP as a cosubstrate. This Pseudomonas paraeruginosa (strain DSM 24068 / PA7) (Pseudomonas aeruginosa (strain PA7)) protein is Shikimate kinase.